The primary structure comprises 296 residues: MAFKYHKVAIIGKHYKKEVSQMVETLYAYLQQQGLEIIIENDTAVDTSLVNVAIASLKEIALRCDVAIVVGGDGNFLKASRLLALYSNIPVIGINKGKLGFLTTLAADDNALKNDLYAILKGDSSVTKMSMLKCRVDNNLRAPLEASIALNEIAITASRGLMFGLKVFIDGRYAFDQRGDGLIVSTPTGSTAHAMSAGGPILNPNQNSVVLVPICSHSLNSRPLVISDESVIDIYITDYNDPEPVLSIDGRHDTILKAHQKVTIQKARKKVTVLHTKDYNYYDTLREKLGWSKVLF.

The Proton acceptor role is filled by D73. NAD(+) is bound by residues 73–74 (DG), K78, 151–152 (NE), R178, D180, and 191–196 (TAHAMS).

The protein belongs to the NAD kinase family. A divalent metal cation is required as a cofactor.

Its subcellular location is the cytoplasm. It catalyses the reaction NAD(+) + ATP = ADP + NADP(+) + H(+). Involved in the regulation of the intracellular balance of NAD and NADP, and is a key enzyme in the biosynthesis of NADP. Catalyzes specifically the phosphorylation on 2'-hydroxyl of the adenosine moiety of NAD to yield NADP. This Francisella tularensis subsp. novicida (strain U112) protein is NAD kinase.